Consider the following 151-residue polypeptide: Large ribosomal subunit protein bL9 (151 aa).

This sequence belongs to the bacterial ribosomal protein bL9 family.

In terms of biological role, binds to the 23S rRNA. The sequence is that of Large ribosomal subunit protein bL9 from Thermosipho africanus (strain TCF52B).